A 313-amino-acid chain; its full sequence is Porphobilinogen deaminase (313 aa).

An S-(dipyrrolylmethanemethyl)cysteine modification is found at Cys242.

Belongs to the HMBS family. Monomer. Dipyrromethane is required as a cofactor.

It catalyses the reaction 4 porphobilinogen + H2O = hydroxymethylbilane + 4 NH4(+). The protein operates within porphyrin-containing compound metabolism; protoporphyrin-IX biosynthesis; coproporphyrinogen-III from 5-aminolevulinate: step 2/4. Tetrapolymerization of the monopyrrole PBG into the hydroxymethylbilane pre-uroporphyrinogen in several discrete steps. This is Porphobilinogen deaminase from Enterobacter sp. (strain 638).